Reading from the N-terminus, the 215-residue chain is CASP-like protein 1U3 (215 aa).

Residues 1 to 13 are Cytoplasmic-facing; sequence MHDEEKKEPKWVT. Residues 14–34 form a helical membrane-spanning segment; the sequence is AVSIAGRIAGMGLAVAAAVLM. Residues 35–68 are Extracellular-facing; it reads STASQCTVYYAAPAASAYGGAARARTVTYSDFPP. A helical membrane pass occupies residues 69–89; sequence FVFLVGAASIAAFLEAIAIFL. Over 90–105 the chain is Cytoplasmic; it reads VVWKKGKDKTTKVLMP. Residues 106–126 traverse the membrane as a helical segment; the sequence is LLGVAVPALLYSATGAAFAAV. Residues 127 to 161 lie on the Extracellular side of the membrane; sequence SDMSYCSANGKRVSICAGSAAAGGGVSGGTNFCSQ. Residues 162–182 traverse the membrane as a helical segment; that stretch reads VHIAVYLSLAAAVAVSVAEVV. The Cytoplasmic segment spans residues 183–215; that stretch reads RGLGGSASGGGSDSDSSSSSESGGCDHGCHHKH. The tract at residues 187-215 is disordered; sequence GSASGGGSDSDSSSSSESGGCDHGCHHKH. Positions 195–205 are enriched in low complexity; that stretch reads DSDSSSSSESG.

This sequence belongs to the Casparian strip membrane proteins (CASP) family. As to quaternary structure, homodimer and heterodimers.

It is found in the cell membrane. This is CASP-like protein 1U3 from Sorghum bicolor (Sorghum).